A 663-amino-acid polypeptide reads, in one-letter code: Beta-galactosidase BgaH (663 aa).

Arginine 103 provides a ligand contact to substrate. Cysteine 107 lines the Zn(2+) pocket. Position 141 (asparagine 141) interacts with substrate. Residue glutamate 142 is the Proton donor of the active site. Zn(2+) contacts are provided by cysteine 151, cysteine 153, and cysteine 156. The active-site Nucleophile is the glutamate 311. Residues tryptophan 319 and 359–362 (EQYH) each bind substrate.

This sequence belongs to the glycosyl hydrolase 42 family. In terms of assembly, homodimer.

The enzyme catalyses Hydrolysis of terminal non-reducing beta-D-galactose residues in beta-D-galactosides.. With respect to regulation, requires 4 M NaCl for maximal activity. Loss of activity if DTT or beta-mercaptoethanol is omitted from buffers. Addition of 5-20 mM EDTA, 1 mM Cu(2+) or 1 mM Zn(2+) results in loss of activity. Its function is as follows. When overexpressed, cleaves several different substrates including o-nitrophenyl-beta-D-galactopyranoside (ONPG), chromogen 5-bromo-4-chloro-3-indolyl-beta-D-galactopyranoside (X-Gal) and lactulose, but not lactose. Also has beta-D-fucosidase activity. No beta-L-fucosidase, beta-glucosidase, beta-arabinosidase or beta-xylosidase activity. This Haloferax lucentense (strain DSM 14919 / JCM 9276 / NCIMB 13854 / Aa 2.2) (Haloferax alicantei) protein is Beta-galactosidase BgaH.